Reading from the N-terminus, the 288-residue chain is Phenazine biosynthesis-like domain-containing protein (288 aa).

Glu46 is an active-site residue.

The protein belongs to the PhzF family. As to quaternary structure, interacts with UNRIP/MAWD.

The protein is Phenazine biosynthesis-like domain-containing protein (PBLD) of Bos taurus (Bovine).